We begin with the raw amino-acid sequence, 943 residues long: WD repeat-containing protein 3 (943 aa).

WD repeat units follow at residues 21 to 60 (SQKGNIVFVTLRGEKGRYVAVPACEHVFIWDLRKGEKILI), 63 to 102 (GLKQEVTCLCPSPDGLHLAVGYEDGSIRIFSLLSGEGNVT), 105 to 144 (GHKAAITTLKYDQLGGRLASGSKDTDIIVWDVINESGLYR), 147 to 186 (GHKDAITQALFLREKNLLVTSGKDTMVKWWDLDTQHCFKT), and 189 to 228 (GHRTEVWGLVLLSEEKRLITGASDSELRVWDIAYLQEIED). Phosphoserine occurs at positions 240 and 241. Position 257 is a phosphothreonine (Thr257). One copy of the WD 6 repeat lies at 277-316 (EGRDRVVNLAVDKTGRILACHGTDSVLELFCILSKKEIQK). Positions 326-345 (RKKAKLHSSKGEEEDPEVNV) are disordered. WD repeat units follow at residues 413-451 (GHRSDVRTLSFSSDNIAVLSAAADSIKIWNRSTLQCIRT), 453-493 (TCEY…ETID), 494-533 (AHDGALWSMSLSPDQRGFVTGGADKSVKFWDFELVKDENS), 547-586 (QLDEDVLCVSYSPNQKLLAVSLLDCTVKIFYVDTLKFFLS), 589-630 (GHKL…KSLF), 631-670 (AHDDSVMYLQFVPKSHLFFTAGKDHKIKQWDADKFEHIQT), and 673-712 (GHHQEIWCLAVSPSGDYVVSSSHDKSLRLWERTREPLILE). Residues Lys474 and Lys529 each participate in a glycyl lysine isopeptide (Lys-Gly) (interchain with G-Cter in SUMO2) cross-link. Position 726 is a phosphoserine (Ser726).

Belongs to the WD repeat WDR3/UTP12 family. In terms of assembly, part of the small subunit (SSU) processome, composed of more than 70 proteins and the RNA chaperone small nucleolar RNA (snoRNA) U3. Ubiquitous.

Its subcellular location is the nucleus. The protein resides in the nucleolus. Part of the small subunit (SSU) processome, first precursor of the small eukaryotic ribosomal subunit. During the assembly of the SSU processome in the nucleolus, many ribosome biogenesis factors, an RNA chaperone and ribosomal proteins associate with the nascent pre-rRNA and work in concert to generate RNA folding, modifications, rearrangements and cleavage as well as targeted degradation of pre-ribosomal RNA by the RNA exosome. The polypeptide is WD repeat-containing protein 3 (Homo sapiens (Human)).